The sequence spans 166 residues: Dihydrofolate reductase (166 aa).

Residues Lys-6–Arg-164 form the DHFR domain. Residue Ile-10–Ala-12 coordinates substrate. Residues Val-11–Ala-12 and Ile-19–Asp-24 contribute to the NADP(+) site. Asp-32 serves as a coordination point for substrate. Gly-48–Asn-51 lines the NADP(+) pocket. Residue Arg-62 coordinates substrate. NADP(+)-binding positions include Leu-67 to Asp-70 and Phe-100 to Ile-105. Residue Thr-119 coordinates substrate.

It belongs to the dihydrofolate reductase family.

It catalyses the reaction (6S)-5,6,7,8-tetrahydrofolate + NADP(+) = 7,8-dihydrofolate + NADPH + H(+). It functions in the pathway cofactor biosynthesis; tetrahydrofolate biosynthesis; 5,6,7,8-tetrahydrofolate from 7,8-dihydrofolate: step 1/1. In terms of biological role, key enzyme in folate metabolism. Catalyzes an essential reaction for de novo glycine and purine synthesis, and for DNA precursor synthesis. This Staphylococcus haemolyticus protein is Dihydrofolate reductase (dfrD).